A 477-amino-acid chain; its full sequence is MSTPQLMQGMQKDLTCQLCLELFRAPVTPECGHTFCQGCLTGVPKNQDQNGSTPCPTCQSPSRPETLQINRQLEHLVQSFKQVPQGHCLEHMDPLSVYCEQDKELICGVCASLGKHKGHNIITASEAFAKLKRQLPQQQVILQEARLKKEKTVAVLDRQVAEVQDTVSRFKGNVKHQLNAMRSYLNIMEASLGKEADKAESAATEALLVERKTMGHYLDQLRQMEGVLKDVEGQEQTEFLRKYCVVAARLNKILSESPPPGRLDIQLPIISDEFKFQVWRKMFRALMPALENMTFDPDTAQQYLVVSSEGKSVECADQKQSVSDEPNRFDKSNCLVSKQSFTEGEHYWEVIVEDKPRWALGIISETANRKGKLHATPSNGFWIIGCKEGKVYEAHTEQKEPRVLRVEGRPEKIGVYLSFSDGVVSFFDSSDEDNLKLLYTFNERFSGRLHPFFDVCWHDKGKNSQPLKIFYPPAEQL.

The Zn(2+) site is built by leucine 14, glutamine 17, proline 29, cysteine 31, threonine 34, glutamine 37, threonine 53, proline 56, glycine 86, leucine 89, valine 97, glutamate 100, leucine 105, glycine 108, glycine 114, and lysine 117. Residues 16–59 (CQLCLELFRAPVTPECGHTFCQGCLTGVPKNQDQNGSTPCPTCQ) form an RING-type zinc finger. The B box-type zinc finger occupies 83–124 (VPQGHCLEHMDPLSVYCEQDKELICGVCASLGKHKGHNIITA). Residues 135–232 (LPQQQVILQE…QMEGVLKDVE (98 aa)) adopt a coiled-coil conformation. One can recognise a B30.2/SPRY domain in the interval 272–476 (DEFKFQVWRK…LKIFYPPAEQ (205 aa)).

It belongs to the TRIM/RBCC family. As to quaternary structure, homodimer. Homooligomer; disulfide-linked. Oligomerizes on the phospholipid membrane. Post-translationally, disulfide bond formation at Cys-244 occurs in case of membrane damage that cause the entry of the oxidized milieu of the extracellular space, resulting in homooligomerization.

It localises to the cell membrane. Its subcellular location is the sarcolemma. The protein resides in the cytoplasmic vesicle membrane. The catalysed reaction is S-ubiquitinyl-[E2 ubiquitin-conjugating enzyme]-L-cysteine + [acceptor protein]-L-lysine = [E2 ubiquitin-conjugating enzyme]-L-cysteine + N(6)-ubiquitinyl-[acceptor protein]-L-lysine.. It participates in protein modification; protein ubiquitination. Its activity is regulated as follows. Specifically binds phosphatidylserine. The binding to phospholipids enhances ubiquitination activity. Its function is as follows. Muscle-specific E3 ubiquitin-protein ligase that plays a central role in cell membrane repair by nucleating the assembly of the repair machinery at injury sites. Acts as a sensor of oxidation: upon membrane damage, entry of extracellular oxidative environment results in disulfide bond formation and homooligomerization at the injury site. This oligomerization acts as a nucleation site for recruitment of TRIM72-containing vesicles to the injury site, leading to membrane patch formation. Probably acts upstream of the Ca(2+)-dependent membrane resealing process. Required for transport of DYSF to sites of cell injury during repair patch formation. Regulates membrane budding and exocytosis. May be involved in the regulation of the mobility of KCNB1-containing endocytic vesicles. This Xenopus laevis (African clawed frog) protein is Tripartite motif-containing protein 72 (trim72).